Reading from the N-terminus, the 208-residue chain is Cysteine-rich protein 2 (208 aa).

Residues 5 to 57 (CPKCDKTVYFAEKVSSLGKDWHKFCLKCERCNKTLTPGGHAEHDGKPFCHKPC) form the LIM zinc-binding 1 domain. Position 23 is an N6-acetyllysine (Lys-23). Ser-104 is subject to Phosphoserine. In terms of domain architecture, LIM zinc-binding 2 spans 126-178 (CPRCNKRVYFAEKVTSLGKDWHRPCLRCERCSKTLTPGGHAEHDGQPYCHKPC). 2 positions are modified to N6-acetyllysine: Lys-138 and Lys-144.

As to quaternary structure, interacts with TGFB1I1. Expressed more abundantly in liver and kidney of females than that of males. Equally expressed in brain, lung and heart.

This Rattus norvegicus (Rat) protein is Cysteine-rich protein 2 (Crip2).